We begin with the raw amino-acid sequence, 293 residues long: Zinc metalloproteinase nas-2 (293 aa).

Residues methionine 1–proline 17 form the signal peptide. The propeptide occupies lysine 18 to arginine 67. The Peptidase M12A domain maps to arginine 67–lysine 260. A glycan (N-linked (GlcNAc...) asparagine) is linked at asparagine 111. 2 disulfides stabilise this stretch: cysteine 114–cysteine 259 and cysteine 139–cysteine 169. Histidine 180 is a binding site for Zn(2+). Residue glutamate 181 is part of the active site. Histidine 184 and histidine 190 together coordinate Zn(2+). Asparagine 287 is a glycosylation site (N-linked (GlcNAc...) asparagine).

The cofactor is Zn(2+).

It is found in the secreted. In terms of biological role, metalloprotease. This is Zinc metalloproteinase nas-2 (nas-2) from Caenorhabditis elegans.